We begin with the raw amino-acid sequence, 252 residues long: Chitooligosaccharide deacetylase (252 aa).

Residues histidine 61 and histidine 125 each coordinate Mg(2+).

The protein belongs to the YdjC deacetylase family. ChbG subfamily. In terms of assembly, homodimer. The cofactor is Mg(2+).

It is found in the cytoplasm. The enzyme catalyses N,N'-diacetylchitobiose + H2O = N-acetyl-beta-D-glucosaminyl-(1-&gt;4)-D-glucosamine + acetate. It carries out the reaction diacetylchitobiose-6'-phosphate + H2O = N'-monoacetylchitobiose-6'-phosphate + acetate. Its pathway is glycan degradation; chitin degradation. Involved in the degradation of chitin. ChbG is essential for growth on the acetylated chitooligosaccharides chitobiose and chitotriose but is dispensable for growth on cellobiose and chitosan dimer, the deacetylated form of chitobiose. Deacetylation of chitobiose-6-P and chitotriose-6-P is necessary for both the activation of the chb promoter by the regulatory protein ChbR and the hydrolysis of phosphorylated beta-glucosides by the phospho-beta-glucosidase ChbF. Catalyzes the removal of only one acetyl group from chitobiose-6-P to yield monoacetylchitobiose-6-P, the inducer of ChbR and the substrate of ChbF. This chain is Chitooligosaccharide deacetylase, found in Escherichia coli O6:K15:H31 (strain 536 / UPEC).